A 290-amino-acid polypeptide reads, in one-letter code: MTTDMTWAQTIILSLIQGLTEFLPVSSSGHLRIFSTLLWGEDAGASFTAVIQLGTELAVLVFFAKDIWNIASAWCKGVWEWLTDLTGKHGRRVHRQSFDYRMGWMVIVGTLPVAVLGYLGKDLIRDNLRNLWITATMLVLFSFVFILAERMGRRERSFDELTMRDSVIMGFAQCLALIPGVSRSGGTVSAGLFLNLDREVATRYSFLLAIPAVLASGLFSLPDAFSPDAGQAASGAQLFVGTAIAFAVGYASIAWLLKFVANHSFAWFALWRIPLGLAVMGLLAFGVLQA.

Transmembrane regions (helical) follow at residues 104–124 (WMVI…KDLI), 128–148 (LRNL…FILA), 174–194 (CLAL…GLFL), 205–225 (SFLL…PDAF), 237–257 (QLFV…AWLL), and 268–288 (FALW…FGVL).

Belongs to the UppP family.

It is found in the cell membrane. The catalysed reaction is di-trans,octa-cis-undecaprenyl diphosphate + H2O = di-trans,octa-cis-undecaprenyl phosphate + phosphate + H(+). Catalyzes the dephosphorylation of undecaprenyl diphosphate (UPP). Confers resistance to bacitracin. The sequence is that of Undecaprenyl-diphosphatase 2 from Corynebacterium jeikeium (strain K411).